A 367-amino-acid chain; its full sequence is Phosphoribosylaminoimidazole-succinocarboxamide synthase (367 aa).

It belongs to the SAICAR synthetase family.

It carries out the reaction 5-amino-1-(5-phospho-D-ribosyl)imidazole-4-carboxylate + L-aspartate + ATP = (2S)-2-[5-amino-1-(5-phospho-beta-D-ribosyl)imidazole-4-carboxamido]succinate + ADP + phosphate + 2 H(+). The protein operates within purine metabolism; IMP biosynthesis via de novo pathway; 5-amino-1-(5-phospho-D-ribosyl)imidazole-4-carboxamide from 5-amino-1-(5-phospho-D-ribosyl)imidazole-4-carboxylate: step 1/2. The protein is Phosphoribosylaminoimidazole-succinocarboxamide synthase of Aliivibrio salmonicida (strain LFI1238) (Vibrio salmonicida (strain LFI1238)).